The primary structure comprises 251 residues: Flap endonuclease Xni (251 aa).

A Mg(2+)-binding site is contributed by D104. Residues 160 to 250 (VQPQQLPDYW…DGNLQQLRLK (91 aa)) enclose the 5'-3' exonuclease domain. K(+) contacts are provided by L171, A172, P180, V182, and I185. An interaction with DNA region spans residues 184–189 (GIGPKS).

It belongs to the Xni family. Mg(2+) is required as a cofactor. The cofactor is K(+).

Its function is as follows. Has flap endonuclease activity. During DNA replication, flap endonucleases cleave the 5'-overhanging flap structure that is generated by displacement synthesis when DNA polymerase encounters the 5'-end of a downstream Okazaki fragment. The protein is Flap endonuclease Xni of Escherichia fergusonii (strain ATCC 35469 / DSM 13698 / CCUG 18766 / IAM 14443 / JCM 21226 / LMG 7866 / NBRC 102419 / NCTC 12128 / CDC 0568-73).